The following is a 2711-amino-acid chain: Chromodomain-helicase-DNA-binding protein 6 (2711 aa).

4 stretches are compositionally biased toward basic and acidic residues: residues 1 to 12, 100 to 115, 122 to 151, and 158 to 171; these read MKMKIQKKEKQL, EPGEQEGTKGSKDREP, EPKEPKEPRRAKEPKRAKEPKETKQKDGVK, and EASGTKEGKEKRSC. Disordered stretches follow at residues 1 to 52 and 66 to 243; these read MKMK…EEAA and EEAD…QVKR. The segment at 1 to 746 is required for DNA-dependent ATPase activity; it reads MKMKIQKKEK…MMELRKCCNH (746 aa). Low complexity predominate over residues 214–224; sequence SLPNPSLQSPE. Chromo domains are found at residues 291–342 and 374–438; these read NIIE…KDPR and IEID…KHVE. One can recognise a Helicase ATP-binding domain in the interval 472 to 646; it reads LFNWYNRKNC…FSLLNFLEPS (175 aa). Residue 485 to 492 coordinates ATP; sequence DEMGLGKT. Residues 597–600 carry the DEAH box motif; it reads DEAH. Positions 786–955 constitute a Helicase C-terminal domain; it reads LIDKLLPKLI…LSKMEVEDLL (170 aa). Residues 1318 to 1389 form a disordered region; that stretch reads SLSAEQGVTD…SDPDKSPWPV (72 aa). Residues 1320 to 1329 show a composition bias toward polar residues; that stretch reads SAEQGVTDGT. Over residues 1332–1350 the composition is skewed to basic and acidic residues; sequence IPERGNIDKEDSAEDKLDG. The 55-residue stretch at 1448 to 1502 folds into the Myb-like domain; it reads RWTRREQADFYRTVSSFGVVYDQEKKAFDWTQFRIISRLDKKSDESLEHYFYSFV. Ser-1865 bears the Phosphoserine mark. 7 disordered regions span residues 1951 to 1978, 1997 to 2059, 2124 to 2147, 2321 to 2350, 2373 to 2419, 2550 to 2602, and 2641 to 2711; these read SEDSEVEKPKAYQPDLYRSKANNSTVEG, EPWK…ASGI, LPTPVLSSSAGSRSSLSEPEATEH, TTLSTTHPEVPGATSSAPEPTAAASSQAEK, GFGT…RGFL, SASL…ITTS, and RHSE…EDTN. Residues 2017–2036 show a composition bias toward basic and acidic residues; the sequence is SEPKPEDMDFENKDDYEKDG. Composition is skewed to low complexity over residues 2130–2140 and 2333–2349; these read SSSAGSRSSLS and ATSSAPEPTAAASSQAE. Residues 2550–2563 are compositionally biased toward low complexity; the sequence is SASLASTKSGTSAT. A compositionally biased stretch (basic and acidic residues) spans 2565–2586; sequence KSTEDKLSGHDVNTDALVDDKP. Polar residues-rich tracts occupy residues 2591-2602 and 2677-2688; these read FSDQSEPTITTS and SDQNCTESSATV. Residues 2690-2711 show a composition bias toward basic and acidic residues; sequence PEREHVAQAREEGLKDSNEDTN.

Belongs to the SNF2/RAD54 helicase family. In terms of assembly, interacts with NFE2L2; involved in activation of the transcription. Widely expressed.

The protein resides in the nucleus. The protein localises to the nucleoplasm. It catalyses the reaction ATP + H2O = ADP + phosphate + H(+). ATP-dependent chromatin-remodeling factor. Regulates transcription by disrupting nucleosomes in a largely non-sliding manner which strongly increases the accessibility of chromatin. Activates transcription of specific genes in response to oxidative stress through interaction with NFE2L2. The chain is Chromodomain-helicase-DNA-binding protein 6 (Chd6) from Mus musculus (Mouse).